Reading from the N-terminus, the 292-residue chain is MSTISAALVMQLRERTGAGMMECKKFLIATNGDIEQAIIEMRKAGQAKADKKADRVAAEGIIVIARSSDERTAVMLEINSETDFVARDENFTNFANAVADAALTNLPKNIEDLSNQALSSGTTVEQARQELVAKIGENIKLRRLERMHCDGVIGYYLHGSRIGVMVALKNGSEALAKDIAMHVAASKPMVVSRDQVPAEAIENEREIFTAQAKESGKPQEIIDKMIDGRINKFIDEVSLLGQPYVKDPNIKVGQLLKEKNAEVISFVRYEVGEGIEKKEDNFVEEVMAQVRT.

The involved in Mg(2+) ion dislocation from EF-Tu stretch occupies residues 82 to 85; that stretch reads TDFV.

This sequence belongs to the EF-Ts family.

Its subcellular location is the cytoplasm. Functionally, associates with the EF-Tu.GDP complex and induces the exchange of GDP to GTP. It remains bound to the aminoacyl-tRNA.EF-Tu.GTP complex up to the GTP hydrolysis stage on the ribosome. This Legionella pneumophila (strain Paris) protein is Elongation factor Ts.